Reading from the N-terminus, the 161-residue chain is MEKEPMTLAGYNKVTAELDFLKKTERPETVIALDEARQLGDLKENAEYHSAKEKLKLIDIQIAELNAVISKAVIIDPTTLPHDRVSFGSTIDLVDVDTDEEFTYTIVGGVESSAEKGMISFNSPLAKQLMGKEAGDELNATLPGGAKTFEILKVYYKEISL.

The stretch at N45–A72 forms a coiled coil.

Belongs to the GreA/GreB family.

Functionally, necessary for efficient RNA polymerase transcription elongation past template-encoded arresting sites. The arresting sites in DNA have the property of trapping a certain fraction of elongating RNA polymerases that pass through, resulting in locked ternary complexes. Cleavage of the nascent transcript by cleavage factors such as GreA or GreB allows the resumption of elongation from the new 3'terminus. GreA releases sequences of 2 to 3 nucleotides. In Aliarcobacter butzleri (strain RM4018) (Arcobacter butzleri), this protein is Transcription elongation factor GreA.